Reading from the N-terminus, the 113-residue chain is Chaperone protein SigE (113 aa).

This sequence belongs to the IpgE/SigE chaperone family. As to quaternary structure, homodimer or higher-order oligomers.

Its subcellular location is the cytoplasm. Molecular chaperone required for SopB/SigD stabilization and secretion. The polypeptide is Chaperone protein SigE (sigE) (Salmonella paratyphi A (strain ATCC 9150 / SARB42)).